The sequence spans 314 residues: Tetraacyldisaccharide 4'-kinase (314 aa).

61-68 (IVGGSGKT) provides a ligand contact to ATP.

It belongs to the LpxK family.

It carries out the reaction a lipid A disaccharide + ATP = a lipid IVA + ADP + H(+). The protein operates within glycolipid biosynthesis; lipid IV(A) biosynthesis; lipid IV(A) from (3R)-3-hydroxytetradecanoyl-[acyl-carrier-protein] and UDP-N-acetyl-alpha-D-glucosamine: step 6/6. Its function is as follows. Transfers the gamma-phosphate of ATP to the 4'-position of a tetraacyldisaccharide 1-phosphate intermediate (termed DS-1-P) to form tetraacyldisaccharide 1,4'-bis-phosphate (lipid IVA). This is Tetraacyldisaccharide 4'-kinase from Aliarcobacter butzleri (strain RM4018) (Arcobacter butzleri).